A 668-amino-acid chain; its full sequence is Macrolide export ATP-binding/permease protein MacB 1/2 (668 aa).

In terms of domain architecture, ABC transporter spans 9 to 247 (IRLRGVGREY…PGPGPAQAPQ (239 aa)). 45–52 (GASGSGKS) is a binding site for ATP. The disordered stretch occupies residues 230-257 (RTGAPAADPGPGPAQAPQPAPQPAPVQA). The span at 237-255 (DPGPGPAQAPQPAPQPAPV) shows a compositional bias: pro residues. Helical transmembrane passes span 294–314 (FLTMLGIIIGIASVVSVVALG), 541–561 (LALLIAAIAVISLVVGGIGVM), 598–618 (LVCVIGGIAGILAALGFGLAF), and 634–654 (MLAALASACAIGLAFGYLPAV).

The protein belongs to the ABC transporter superfamily. Macrolide exporter (TC 3.A.1.122) family. In terms of assembly, homodimer.

It is found in the cell inner membrane. Its function is as follows. Non-canonical ABC transporter that contains transmembrane domains (TMD), which form a pore in the inner membrane, and an ATP-binding domain (NBD), which is responsible for energy generation. Confers resistance against macrolides. In Paracoccus denitrificans (strain Pd 1222), this protein is Macrolide export ATP-binding/permease protein MacB 1/2.